The sequence spans 338 residues: Heme A synthase (338 aa).

A run of 5 helical transmembrane segments spans residues 6 to 26 (ITKW…IGGI), 93 to 113 (GRIT…KGII), 118 to 138 (IAPY…GWYM), 154 to 174 (LAFH…QLIK), and 201 to 221 (VIYL…GLIY). His-256 contributes to the heme binding site. A run of 3 helical transmembrane segments spans residues 258–278 (LGGY…LKIE), 285–305 (IAYF…ITLL), and 308–328 (VPII…SVII). Position 316 (His-316) interacts with heme.

The protein belongs to the COX15/CtaA family. Type 2 subfamily. Interacts with CtaB. Requires heme b as cofactor.

The protein localises to the cell membrane. It catalyses the reaction Fe(II)-heme o + 2 A + H2O = Fe(II)-heme a + 2 AH2. Its pathway is porphyrin-containing compound metabolism; heme A biosynthesis; heme A from heme O: step 1/1. Its function is as follows. Catalyzes the conversion of heme O to heme A by two successive hydroxylations of the methyl group at C8. The first hydroxylation forms heme I, the second hydroxylation results in an unstable dihydroxymethyl group, which spontaneously dehydrates, resulting in the formyl group of heme A. This is Heme A synthase from Rickettsia canadensis (strain McKiel).